Consider the following 1446-residue polypeptide: DNA polymerase III PolC-type (1446 aa).

The 157-residue stretch at 425 to 581 folds into the Exonuclease domain; that stretch reads YVIFDVETTG…ADAESTGYLL (157 aa).

Belongs to the DNA polymerase type-C family. PolC subfamily.

The protein resides in the cytoplasm. The catalysed reaction is DNA(n) + a 2'-deoxyribonucleoside 5'-triphosphate = DNA(n+1) + diphosphate. Functionally, required for replicative DNA synthesis. This DNA polymerase also exhibits 3' to 5' exonuclease activity. The sequence is that of DNA polymerase III PolC-type from Latilactobacillus sakei subsp. sakei (strain 23K) (Lactobacillus sakei subsp. sakei).